The chain runs to 175 residues: ATP synthase subunit delta (175 aa).

Belongs to the ATPase delta chain family. As to quaternary structure, F-type ATPases have 2 components, F(1) - the catalytic core - and F(0) - the membrane proton channel. F(1) has five subunits: alpha(3), beta(3), gamma(1), delta(1), epsilon(1). F(0) has three main subunits: a(1), b(2) and c(10-14). The alpha and beta chains form an alternating ring which encloses part of the gamma chain. F(1) is attached to F(0) by a central stalk formed by the gamma and epsilon chains, while a peripheral stalk is formed by the delta and b chains.

Its subcellular location is the cell inner membrane. Its function is as follows. F(1)F(0) ATP synthase produces ATP from ADP in the presence of a proton or sodium gradient. F-type ATPases consist of two structural domains, F(1) containing the extramembraneous catalytic core and F(0) containing the membrane proton channel, linked together by a central stalk and a peripheral stalk. During catalysis, ATP synthesis in the catalytic domain of F(1) is coupled via a rotary mechanism of the central stalk subunits to proton translocation. This protein is part of the stalk that links CF(0) to CF(1). It either transmits conformational changes from CF(0) to CF(1) or is implicated in proton conduction. This Xanthomonas euvesicatoria pv. vesicatoria (strain 85-10) (Xanthomonas campestris pv. vesicatoria) protein is ATP synthase subunit delta.